A 499-amino-acid polypeptide reads, in one-letter code: MNFFIKSCFLDKEKTDCIVVSVFELSELSDSAIYLDKCSNGHITSLIKLGDIQGKIGDTLMLYKVPKILSKRILLVGCGKKDEINIIRFKKILKNTIHAIKKKSITNIVYSFSNINIDNIYWMIRRMVLSLKESLYETIKINNINIKNTNIHSITLNIIKKNDLFIAKTALKHALAIDHAITSTKNLSNLPPNICNPLYLSYKAQELSKKYENNIVVEIIDIKKMKELGMNAYIAVGNGSKNKPFMSVIKYSGNNIVNKKIIAFVGKGLTFDSGGISIKPALHMHEMKYDMCGAAAVYGTLIMAAELQLPLTVIGILSGCENMVGSHSFRPGDVLTTMSGQTVEILNTDAEGRLVLCDSLTYLERFSPDIVIDVATLTGACVTALGESVSGLFSNNEELSNQLLHASQETDDKIWSLPLFSEYHKELNSDIADFSNIGRGKAGAITAACFLSKFTKKYNWAHLDIAGTAWKSGKKSGATGRPVELLCQFLLNQSNYIYN.

Lys267 and Asp272 together coordinate Mn(2+). Residue Lys279 is part of the active site. The Mn(2+) site is built by Asp290, Asp349, and Glu351. Arg353 is a catalytic residue.

Belongs to the peptidase M17 family. Mn(2+) serves as cofactor.

Its subcellular location is the cytoplasm. It catalyses the reaction Release of an N-terminal amino acid, Xaa-|-Yaa-, in which Xaa is preferably Leu, but may be other amino acids including Pro although not Arg or Lys, and Yaa may be Pro. Amino acid amides and methyl esters are also readily hydrolyzed, but rates on arylamides are exceedingly low.. The enzyme catalyses Release of an N-terminal amino acid, preferentially leucine, but not glutamic or aspartic acids.. Its function is as follows. Presumably involved in the processing and regular turnover of intracellular proteins. Catalyzes the removal of unsubstituted N-terminal amino acids from various peptides. The chain is Cytosol aminopeptidase (pepA) from Buchnera aphidicola subsp. Acyrthosiphon pisum (strain APS) (Acyrthosiphon pisum symbiotic bacterium).